The following is a 245-amino-acid chain: MADS-box transcription factor 55 (245 aa).

Residues 1–61 form the MADS-box domain; that stretch reads MARERREIRR…GKLSQFASSN (61 aa). Residues 109-199 enclose the K-box domain; sequence LQLEHSKCSS…RDQMPQVPTA (91 aa). Residues 197–245 are disordered; sequence PTAGLAVPDTENVLTEDGQSSESVMTALNSGSSQDNDDGSDISLKLGLP. Over residues 213–224 the composition is skewed to polar residues; that stretch reads DGQSSESVMTAL.

In terms of tissue distribution, expressed in roots, shoots and developing panicles. Expressed in shoots.

It is found in the nucleus. Functionally, transcription factor that acts as a negative regulator of brassinosteroid signaling. The polypeptide is MADS-box transcription factor 55 (MADS55) (Oryza sativa subsp. japonica (Rice)).